The primary structure comprises 63 residues: Beta-defensin 38 (63 aa).

The signal sequence occupies residues M1–A21. Cystine bridges form between C29–C58, C36–C51, and C41–C59.

It belongs to the beta-defensin family. Only expressed in epididymis (caput, corpus and cauda).

It is found in the secreted. Synthetic Defb38 kills both Gram-negative (E.coli and P.aeruginosa) and Gram-positive (E.faecium) bacteria. This is Beta-defensin 38 (Defb38) from Mus musculus (Mouse).